Consider the following 228-residue polypeptide: tRNA (guanine-N(1)-)-methyltransferase (228 aa).

S-adenosyl-L-methionine is bound by residues glycine 111 and 130–135; that span reads IGDFVL.

The protein belongs to the RNA methyltransferase TrmD family. As to quaternary structure, homodimer.

It is found in the cytoplasm. It catalyses the reaction guanosine(37) in tRNA + S-adenosyl-L-methionine = N(1)-methylguanosine(37) in tRNA + S-adenosyl-L-homocysteine + H(+). Its function is as follows. Specifically methylates guanosine-37 in various tRNAs. The polypeptide is tRNA (guanine-N(1)-)-methyltransferase (Ureaplasma parvum serovar 3 (strain ATCC 27815 / 27 / NCTC 11736)).